A 309-amino-acid chain; its full sequence is Porphobilinogen deaminase (309 aa).

S-(dipyrrolylmethanemethyl)cysteine is present on Cys244.

It belongs to the HMBS family. As to quaternary structure, monomer. It depends on dipyrromethane as a cofactor.

It carries out the reaction 4 porphobilinogen + H2O = hydroxymethylbilane + 4 NH4(+). It functions in the pathway porphyrin-containing compound metabolism; protoporphyrin-IX biosynthesis; coproporphyrinogen-III from 5-aminolevulinate: step 2/4. In terms of biological role, tetrapolymerization of the monopyrrole PBG into the hydroxymethylbilane pre-uroporphyrinogen in several discrete steps. The polypeptide is Porphobilinogen deaminase (Listeria welshimeri serovar 6b (strain ATCC 35897 / DSM 20650 / CCUG 15529 / CIP 8149 / NCTC 11857 / SLCC 5334 / V8)).